Consider the following 752-residue polypeptide: Protein WEAK CHLOROPLAST MOVEMENT UNDER BLUE LIGHT-like 2 (752 aa).

At Ser-143 the chain carries Phosphoserine. 2 coiled-coil regions span residues 186–557 (ERRK…SRAS) and 596–651 (ELSK…KEAM). The disordered stretch occupies residues 476–495 (KHDLSETRQRNREDTREEKC). A compositionally biased stretch (basic and acidic residues) spans 653–675 (KVEKARDGKVGMDHELRKWRSDN). Positions 653-733 (KVEKARDGKV…ETETKKKKKR (81 aa)) are disordered. The span at 690 to 723 (KSKSALHQPTTFTFGEQASSSNVTPQASSSNVTP) shows a compositional bias: polar residues.

This sequence belongs to the WEB family.

The protein is Protein WEAK CHLOROPLAST MOVEMENT UNDER BLUE LIGHT-like 2 (WEL2) of Arabidopsis thaliana (Mouse-ear cress).